A 266-amino-acid polypeptide reads, in one-letter code: Proline-rich protein 23A (266 aa).

Over residues 1-18 the composition is skewed to low complexity; the sequence is MGSRPRSPSAFPAPWWGQ. 2 disordered regions span residues 1–47 and 197–266; these read MGSR…SLED and EPCA…LFQE. Residues 227 to 238 show a composition bias toward pro residues; it reads PSSPLQPLPPSP. Residues 255 to 266 show a composition bias toward basic residues; that stretch reads PPCKARRRLFQE.

Belongs to the PRR23 family.

In Homo sapiens (Human), this protein is Proline-rich protein 23A (PRR23A).